Consider the following 396-residue polypeptide: Glyceraldehyde-3-phosphate dehydrogenase GAPA1, chloroplastic (396 aa).

A chloroplast-targeting transit peptide spans 1–60 (MASVTFSVPKGFTEFSGLRSSSASLPFGKKLSSDEFVSIVSFQTSAMGSSGGYRKGVTEA). Residues 71–72 (RI), Asp-95, and Arg-140 contribute to the NADP(+) site. D-glyceraldehyde 3-phosphate contacts are provided by residues 212-214 (SCT), Thr-243, Arg-258, 271-272 (TG), and Arg-294. Cys-213 serves as the catalytic Nucleophile. Asn-376 is an NADP(+) binding site.

This sequence belongs to the glyceraldehyde-3-phosphate dehydrogenase family. In terms of assembly, tetramer of either four A chains (GAPDH 2) or two A and two B chains (GAPDH 1). As to expression, expressed in leaves and stems.

Its subcellular location is the plastid. It is found in the chloroplast membrane. The protein localises to the chloroplast stroma. It catalyses the reaction D-glyceraldehyde 3-phosphate + phosphate + NADP(+) = (2R)-3-phospho-glyceroyl phosphate + NADPH + H(+). It participates in carbohydrate biosynthesis; Calvin cycle. Involved in the photosynthetic reductive pentose phosphate pathway (Calvin-Benson cycle). Catalyzes the reduction of 1,3-diphosphoglycerate by NADPH. The chain is Glyceraldehyde-3-phosphate dehydrogenase GAPA1, chloroplastic (GAPA1) from Arabidopsis thaliana (Mouse-ear cress).